The primary structure comprises 455 residues: uncharacterized protein (455 aa).

This is an uncharacterized protein from Acanthamoeba polyphaga (Amoeba).